A 231-amino-acid polypeptide reads, in one-letter code: A-type ATP synthase subunit D (231 aa).

This sequence belongs to the V-ATPase D subunit family. In terms of assembly, has multiple subunits with at least A(3), B(3), C, D, E, F, H, I and proteolipid K(x).

Its subcellular location is the cell membrane. Component of the A-type ATP synthase that produces ATP from ADP in the presence of a proton gradient across the membrane. The polypeptide is A-type ATP synthase subunit D (Methanobrevibacter smithii (strain ATCC 35061 / DSM 861 / OCM 144 / PS)).